The primary structure comprises 327 residues: N-acetylmuramoyl-L-alanine amidase sle1 (327 aa).

A signal peptide spans 1–25 (MRKKIIATVIGTSALAAVTWTNADA). 3 consecutive LysM domains span residues 27–70 (TTYK…SLKV), 86–129 (STYT…KLKV), and 150–193 (TTYT…KLKV). A disordered region spans residues 68–89 (LKVSGSTSSSTSSNTSTGSTYT). A compositionally biased stretch (low complexity) spans 71-87 (SGSTSSSTSSNTSTGST). One can recognise a Peptidase C51 domain in the interval 203-327 (GSSSTGSAGY…SQVSSYVYIH (125 aa)).

The protein resides in the secreted. It localises to the cell surface. It catalyses the reaction Hydrolyzes the link between N-acetylmuramoyl residues and L-amino acid residues in certain cell-wall glycopeptides.. Peptidoglycan hydrolase involved in the splitting of the septum during cell division. This is N-acetylmuramoyl-L-alanine amidase sle1 (sle1) from Staphylococcus saprophyticus subsp. saprophyticus (strain ATCC 15305 / DSM 20229 / NCIMB 8711 / NCTC 7292 / S-41).